We begin with the raw amino-acid sequence, 813 residues long: Phosphate transporter PHO1 homolog 3 (813 aa).

An SPX domain is found at 1–359 (MKFGKEFSSQ…SRDATKPYMK (359 aa)). Residues 1–411 (MKFGKEFSSQ…KAKRERHRIT (411 aa)) are Cytoplasmic-facing. The interval 214–266 (EHMEAIQEGGSSRAGLMEDDEEDEDEQNETSVVSTGAIDNETTTSRMRGARPS) is disordered. The span at 230–241 (MEDDEEDEDEQN) shows a compositional bias: acidic residues. Residues 412–432 (FSTGFSAGCVFSLIVALVAII) form a helical membrane-spanning segment. The Extracellular segment spans residues 433–450 (RTRNLLEMEGQKEYMNTM). The chain crosses the membrane as a helical span at residues 451–471 (FPLYSLFGFIVLHIIVYAANI). The Cytoplasmic portion of the chain corresponds to 472–496 (YYWRRYRVNYSFIFGFKQGTELGYR). Residues 497–517 (QVLLVGFSIGVLALLCVLANL) traverse the membrane as a helical segment. At 518 to 533 (DMEADPKTKAYQARTE) the chain is on the extracellular side. The helical transmembrane segment at 534 to 554 (ILPLILLAAMFIVLVLPFNYF) threads the bilayer. Topologically, residues 555–684 (YRSSRFFFLT…SIQKGQVAWR (130 aa)) are cytoplasmic. An EXS domain is found at 618–813 (KESDVYNTFF…NYDEDDDKDN (196 aa)). A helical transmembrane segment spans residues 685-705 (VLAAVFSFIAAIFCTYWDFVH). Residues 706 to 729 (DWGLLNRTSKNRWLRDKLLVPQKK) lie on the Extracellular side of the membrane. A helical membrane pass occupies residues 730 to 750 (VYFIAMVLNVLLRFAWIQTVL). The Cytoplasmic segment spans residues 751–813 (DFNFSFMHRQ…NYDEDDDKDN (63 aa)).

It belongs to the SYG1 (TC 2.A.94) family. In terms of tissue distribution, expressed in vascular cylinder of roots, leaves and filaments. Expressed in receptacle and stigma apex.

The protein localises to the cell membrane. Functionally, may transport inorganic phosphate (Pi). The polypeptide is Phosphate transporter PHO1 homolog 3 (PHO1;H3) (Arabidopsis thaliana (Mouse-ear cress)).